A 239-amino-acid chain; its full sequence is MICOS complex subunit mic25a (239 aa).

Residue Gly2 is the site of N-myristoyl glycine attachment. 2 disordered regions span residues 27–88 (VKLS…KKRY) and 113–133 (DISR…ERAK). Residues 50-78 (NKENQGHQTRTPSTSDAQAPKTQAKTTFP) are compositionally biased toward polar residues. A compositionally biased stretch (basic and acidic residues) spans 79 to 88 (DSKEELKKRY). Residues 79–166 (DSKEELKKRY…ITQLEKKNEE (88 aa)) are a coiled coil. One can recognise a CHCH domain in the interval 192-234 (EPVCLNLQAQILNCYRENREQTLQCSDLAKEYMQCINAAKKNL). Short sequence motifs (cx9C motif) lie at residues 195 to 205 (CLNLQAQILNC) and 216 to 226 (CSDLAKEYMQC). Cystine bridges form between Cys195–Cys226 and Cys205–Cys216.

The protein belongs to the MICOS complex subunit Mic19 family. Metazoan Mic25 subfamily. In terms of assembly, component of the mitochondrial contact site and cristae organizing system (MICOS) complex (also known as MINOS or MitOS complex).

It is found in the mitochondrion inner membrane. In terms of biological role, component of the MICOS complex, a large protein complex of the mitochondrial inner membrane that plays crucial roles in the maintenance of crista junctions, inner membrane architecture, and formation of contact sites to the outer membrane. This chain is MICOS complex subunit mic25a (chchd6a), found in Danio rerio (Zebrafish).